The chain runs to 606 residues: Peptide-N(4)-(N-acetyl-beta-glucosaminyl)asparagine amidase (606 aa).

One can recognise a Thioredoxin domain in the interval 2–108; sequence PVTEVGSLPE…IAEKIRQHYS (107 aa). 4 residues coordinate Zn(2+): C191, C194, C225, and C228. C251 acts as the Nucleophile in catalysis. Residues H278 and D295 contribute to the active site. Residues 404–606 form the PAW domain; that stretch reads DLGGRITGSE…SFSVKIWMKN (203 aa).

This sequence belongs to the transglutaminase-like superfamily. PNGase family. Zn(2+) is required as a cofactor.

It localises to the cytoplasm. Its subcellular location is the endoplasmic reticulum. The enzyme catalyses Hydrolysis of an N(4)-(acetyl-beta-D-glucosaminyl)asparagine residue in which the glucosamine residue may be further glycosylated, to yield a (substituted) N-acetyl-beta-D-glucosaminylamine and a peptide containing an aspartate residue.. Its activity is regulated as follows. Inhibited by Zn(2+) and z-VAD-fmk (caspase inhibitor) but unaffected by EDTA. Functionally, specifically deglycosylates the denatured form of N-linked glycoproteins in the cytoplasm and assists their proteasome-mediated degradation. Cleaves the beta-aspartyl-glucosamine (GlcNAc) of the glycan and the amide side chain of Asn, converting Asn to Asp. Prefers proteins containing high-mannose over those bearing complex type oligosaccharides. Can recognize misfolded proteins in the endoplasmic reticulum that are exported to the cytosol to be destroyed and deglycosylate them, while it has no activity toward native proteins. Deglycosylation is a prerequisite for subsequent proteasome-mediated degradation of some, but not all, misfolded glycoproteins. Also displays oxidoreductase (thioredoxin) activity. Involved in regulating the expression of proteasomal subunits such as rpt-3 in order to confer resistance to proteasomal dysfunction. This chain is Peptide-N(4)-(N-acetyl-beta-glucosaminyl)asparagine amidase (png-1), found in Caenorhabditis elegans.